Here is a 361-residue protein sequence, read N- to C-terminus: tRNA(Ile)-lysidine synthase (361 aa).

32-37 is a binding site for ATP; sequence SGGPDS.

The protein belongs to the tRNA(Ile)-lysidine synthase family.

Its subcellular location is the cytoplasm. It carries out the reaction cytidine(34) in tRNA(Ile2) + L-lysine + ATP = lysidine(34) in tRNA(Ile2) + AMP + diphosphate + H(+). Ligates lysine onto the cytidine present at position 34 of the AUA codon-specific tRNA(Ile) that contains the anticodon CAU, in an ATP-dependent manner. Cytidine is converted to lysidine, thus changing the amino acid specificity of the tRNA from methionine to isoleucine. This chain is tRNA(Ile)-lysidine synthase, found in Bradyrhizobium diazoefficiens (strain JCM 10833 / BCRC 13528 / IAM 13628 / NBRC 14792 / USDA 110).